The primary structure comprises 332 residues: Beta-hexosaminidase (332 aa).

Substrate is bound by residues D62, R70, R131, and 161–162 (KH). The active-site Proton donor/acceptor is the H174. The active-site Nucleophile is the D244.

The protein belongs to the glycosyl hydrolase 3 family. NagZ subfamily.

It localises to the cytoplasm. It catalyses the reaction Hydrolysis of terminal non-reducing N-acetyl-D-hexosamine residues in N-acetyl-beta-D-hexosaminides.. It functions in the pathway cell wall biogenesis; peptidoglycan recycling. Plays a role in peptidoglycan recycling by cleaving the terminal beta-1,4-linked N-acetylglucosamine (GlcNAc) from peptide-linked peptidoglycan fragments, giving rise to free GlcNAc, anhydro-N-acetylmuramic acid and anhydro-N-acetylmuramic acid-linked peptides. The protein is Beta-hexosaminidase of Pseudomonas aeruginosa (strain LESB58).